The primary structure comprises 329 residues: GTP 3',8-cyclase (329 aa).

In terms of domain architecture, Radical SAM core spans 8-234 (AFARKFYYLR…QQRARSDGPA (227 aa)). R17 is a binding site for GTP. The [4Fe-4S] cluster site is built by C24 and C28. Y30 lines the S-adenosyl-L-methionine pocket. Residue C31 participates in [4Fe-4S] cluster binding. Residue R68 participates in GTP binding. S-adenosyl-L-methionine is bound at residue G72. T99 serves as a coordination point for GTP. S123 serves as a coordination point for S-adenosyl-L-methionine. K160 lines the GTP pocket. M194 lines the S-adenosyl-L-methionine pocket. The [4Fe-4S] cluster site is built by C257 and C260. Residue 262–264 (RLR) participates in GTP binding. C274 is a [4Fe-4S] cluster binding site.

The protein belongs to the radical SAM superfamily. MoaA family. As to quaternary structure, monomer and homodimer. Requires [4Fe-4S] cluster as cofactor.

It carries out the reaction GTP + AH2 + S-adenosyl-L-methionine = (8S)-3',8-cyclo-7,8-dihydroguanosine 5'-triphosphate + 5'-deoxyadenosine + L-methionine + A + H(+). Its pathway is cofactor biosynthesis; molybdopterin biosynthesis. In terms of biological role, catalyzes the cyclization of GTP to (8S)-3',8-cyclo-7,8-dihydroguanosine 5'-triphosphate. The chain is GTP 3',8-cyclase from Pectobacterium atrosepticum (strain SCRI 1043 / ATCC BAA-672) (Erwinia carotovora subsp. atroseptica).